Consider the following 206-residue polypeptide: MRWLGRGERVVHDSRFLTVSVADVELPGGETVEHHFVRAPGAAIIVVQDERQRILMMYRHRFVSDLWGWELPGGLVDDREDPAVTAAREAEEETGYRPRNVRHLLTYQPMAGMVDSPHHIYLADGADLVGGPTECTEAQETRWMPLDEAAELLRSGRTVTSGTAIGLLAVLGLGGARQQPGGVQEQPGGAQQQGMNESHSGRTVRG.

One can recognise a Nudix hydrolase domain in the interval 37-166 (VRAPGAAIIV…RTVTSGTAIG (130 aa)). Residues 74-95 (GLVDDREDPAVTAAREAEEETG) carry the Nudix box motif. Residues 177–194 (RQQPGGVQEQPGGAQQQG) are compositionally biased toward low complexity. A disordered region spans residues 177–206 (RQQPGGVQEQPGGAQQQGMNESHSGRTVRG).

The protein belongs to the Nudix hydrolase family. Requires Mg(2+) as cofactor.

It catalyses the reaction CMP-5'-(N-acetyl-N-hydroxy-3-aminopropyl)phosphonate + H2O = 3-(N-acetyl-N-hydroxy)aminopropylphosphonate + CMP + H(+). It functions in the pathway antibiotic biosynthesis. In terms of biological role, nucleotide hydrolase involved in the biosynthesis of the phosphonate antibiotic FR-900098, a potent antimalarial agent that acts as an inhibitor of 1-deoxy-D-xylulose 5-phosphate reductoisomerase (DXR), the first enzyme in the nonmevalonate pathway for isoprenoid biosynthesis. Catalyzes the hydrolysis of CMP-5'-(N-acetyl-N-hydroxy-3-aminopropyl)phosphonate (CMP-5'-FR-900098) to produce CMP and the final compound FR-900098. In vitro, has broad substrate specificity and also catalyzes the hydrolysis of all the other CMP-containing intermediates within the pathway and shows low activity toward CTP. This chain is CMP-5'-(N-acetyl-N-hydroxy-3-aminopropyl)phosphonate hydrolase, found in Streptomyces rubellomurinus (strain ATCC 31215).